The following is a 55-amino-acid chain: Large ribosomal subunit protein bL33 (55 aa).

This sequence belongs to the bacterial ribosomal protein bL33 family.

This chain is Large ribosomal subunit protein bL33, found in Methylobacterium radiotolerans (strain ATCC 27329 / DSM 1819 / JCM 2831 / NBRC 15690 / NCIMB 10815 / 0-1).